We begin with the raw amino-acid sequence, 271 residues long: Insulin-like growth factor-binding protein 5 (271 aa).

The signal sequence occupies residues Met-1–Gly-19. In terms of domain architecture, IGFBP N-terminal spans Ser-22 to Glu-102. Intrachain disulfides connect Cys-26–Cys-52, Cys-29–Cys-54, Cys-37–Cys-55, Cys-44–Cys-58, Cys-66–Cys-79, and Cys-73–Cys-99. The span at Thr-109 to Pro-121 shows a compositional bias: basic and acidic residues. The disordered stretch occupies residues Thr-109–Glu-129. Phosphoserine is present on Ser-115. The Thyroglobulin type-1 domain occupies Gln-188–Cys-262. Disulfide bonds link Cys-191–Cys-218, Cys-229–Cys-240, and Cys-242–Cys-262.

In terms of assembly, interacts with IGF1; this interaction enhances the growth stimulatory effects of IGF1 on fibroblasts. Interacts with CAV1; this interaction allows trafficking of IGFBP5 from the plasma membrane to the nucleus. Interacts with NCL; this interaction is necessary for IGFBP5 localization to the nucleus. As to expression, most abundant in kidney, uterus and gastrocnemius muscle.

Its subcellular location is the secreted. It localises to the cytoplasm. The protein localises to the nucleus. Multifunctional protein that plays a critical role in regulating the availability of IGFs to their receptors and thereby regulates IGF-mediated cellular processes including proliferation, differentiation, and apoptosis in a cell-type specific manner. Increases the cell proliferation of osteoblasts, intestinal smooth muscle cells and neuroblastoma cells. Enhances adhesion and survival of epithelial cells but decreases adhesion of mesenchymal cells. Once secreted, acts as a major mediator of mTORC1-dependent feedback inhibition of IGF1 signaling. Also plays a role in the induction of extracellular matrix (ECM) production and deposition independently of its nuclear translocation and binding to IGFs. Acts itself as a growth factor that can act independently of IGFs to regulate bone formation. Acts as a ligand for the ROR1 receptor which triggers formation of ROR1/HER2 heterodimer to enhance CREB oncogenic signaling. The chain is Insulin-like growth factor-binding protein 5 (Igfbp5) from Mus musculus (Mouse).